Reading from the N-terminus, the 273-residue chain is Peptide deformylase 1B, chloroplastic/mitochondrial (273 aa).

A chloroplast and mitochondrion-targeting transit peptide spans 1-56 (MAVCNCFLQAPPLSRILLPVLSRRATTLSAGYGRLKSTVTFCSTVNRTSPLTSSVR). The Fe cation site is built by Cys-171 and His-213. The active site involves Glu-214. His-217 contributes to the Fe cation binding site. Basic and acidic residues predominate over residues 246–261 (YEEKTGLPSPERVEAR). The segment at 246 to 273 (YEEKTGLPSPERVEARQKRKAGVGFGKR) is disordered. The segment covering 262-273 (QKRKAGVGFGKR) has biased composition (basic residues).

It belongs to the polypeptide deformylase family. Homodimer. It depends on Fe(2+) as a cofactor. Expressed in leaves and flowers.

It is found in the plastid. Its subcellular location is the chloroplast stroma. The protein localises to the mitochondrion. The catalysed reaction is N-terminal N-formyl-L-methionyl-[peptide] + H2O = N-terminal L-methionyl-[peptide] + formate. Its activity is regulated as follows. Inhibited by actinonin. Removes the formyl group from the N-terminal Met of newly synthesized proteins. Has a preferred substrate specificity towards the photosystem II (PS II) D1 polypeptide. The polypeptide is Peptide deformylase 1B, chloroplastic/mitochondrial (PDF1B) (Arabidopsis thaliana (Mouse-ear cress)).